A 1404-amino-acid chain; its full sequence is DNA-directed RNA polymerase subunit beta' (1404 aa).

Zn(2+)-binding residues include Cys-72, Cys-74, Cys-87, and Cys-90. Mg(2+)-binding residues include Asp-463, Asp-465, and Asp-467. Positions 811, 885, 892, and 895 each coordinate Zn(2+).

The protein belongs to the RNA polymerase beta' chain family. As to quaternary structure, the RNAP catalytic core consists of 2 alpha, 1 beta, 1 beta' and 1 omega subunit. When a sigma factor is associated with the core the holoenzyme is formed, which can initiate transcription. Requires Mg(2+) as cofactor. Zn(2+) is required as a cofactor.

The catalysed reaction is RNA(n) + a ribonucleoside 5'-triphosphate = RNA(n+1) + diphosphate. In terms of biological role, DNA-dependent RNA polymerase catalyzes the transcription of DNA into RNA using the four ribonucleoside triphosphates as substrates. In Jannaschia sp. (strain CCS1), this protein is DNA-directed RNA polymerase subunit beta'.